A 268-amino-acid chain; its full sequence is Protein MGF 300-1L (268 aa).

Residues 1–175 (MVSLTTCCLK…QTFKTFYAKN (175 aa)) lie on the Cytoplasmic side of the membrane. A helical membrane pass occupies residues 176–193 (YSLSTLYCIFLAIYYKLY). Residues 194 to 268 (TALRKMVKIY…MYAFSQNDYW (75 aa)) are Extracellular-facing. N-linked (GlcNAc...) asparagine; by host glycosylation occurs at Asn227.

Belongs to the asfivirus MGF 300 family.

Its subcellular location is the host membrane. Plays a role in virus cell tropism, and may be required for efficient virus replication in macrophages. The sequence is that of Protein MGF 300-1L from African swine fever virus (strain Badajoz 1971 Vero-adapted) (Ba71V).